The sequence spans 344 residues: Putative 2-hydroxyacid dehydrogenase YoaD (344 aa).

Aspartate 193 provides a ligand contact to NAD(+). The active site involves arginine 251. Position 275 (aspartate 275) interacts with NAD(+). The active site involves glutamate 280. Histidine 300 acts as the Proton donor in catalysis.

It belongs to the D-isomer specific 2-hydroxyacid dehydrogenase family.

In Bacillus subtilis (strain 168), this protein is Putative 2-hydroxyacid dehydrogenase YoaD (yoaD).